The sequence spans 164 residues: Protein HIT1 (164 aa).

Positions 8, 11, 28, and 32 each coordinate Zn(2+). Residues 8-49 (CGICRGVDGKYKCPKCGVRYCSLKCYKDAAKHVHKESEQPRA) form an HIT-type; degenerate zinc finger.

The chain is Protein HIT1 (HIT1) from Saccharomyces cerevisiae (strain ATCC 204508 / S288c) (Baker's yeast).